The sequence spans 43 residues: RGVCSTPEGSCVHNGCICQNAPCCHPSGCNWANVCPGYLWDKN.

A propeptide is located at residue R1. Cystine bridges form between C4-C16, C11-C24, C18-C29, and C23-C35. W31 carries the 6'-bromotryptophan modification. Residue P36 is modified to 4-hydroxyproline. A 6'-bromotryptophan modification is found at W40.

In terms of tissue distribution, expressed by the venom duct.

It localises to the secreted. Mu-conotoxins block voltage-gated sodium channels. This toxin reversibly blocks voltage-gated sodium channel in cephalopods, with no alteration in the voltage dependence of sodium conductance or on the kinetics of inactivation. In Californiconus californicus (California cone), this protein is Mu-conotoxin-like Cal 12.2c.